We begin with the raw amino-acid sequence, 264 residues long: tRNA pseudouridine synthase A (264 aa).

The active-site Nucleophile is the Asp-51. Residue Tyr-109 coordinates substrate.

This sequence belongs to the tRNA pseudouridine synthase TruA family. As to quaternary structure, homodimer.

The enzyme catalyses uridine(38/39/40) in tRNA = pseudouridine(38/39/40) in tRNA. Functionally, formation of pseudouridine at positions 38, 39 and 40 in the anticodon stem and loop of transfer RNAs. In Polaromonas naphthalenivorans (strain CJ2), this protein is tRNA pseudouridine synthase A.